The chain runs to 510 residues: NAD(P)H-quinone oxidoreductase subunit 2 B, chloroplastic (510 aa).

The next 13 helical transmembrane spans lie at 24-44 (LLLF…GLIL), 57-77 (IPWL…ALLF), 99-119 (IFQF…VEYI), 124-144 (MAIT…MFLC), 149-169 (LITI…LSGY), 183-203 (YLLM…WLYG), 227-247 (PGIS…LSLA), 295-315 (WHLL…LIAI), 323-343 (MLAY…IVGD), 354-374 (YMLF…LFGL), 395-415 (ALSL…AGFF), 418-438 (LHLF…IGLL), and 482-502 (LSMI…NPIV).

Belongs to the complex I subunit 2 family. As to quaternary structure, NDH is composed of at least 16 different subunits, 5 of which are encoded in the nucleus.

The protein localises to the plastid. The protein resides in the chloroplast thylakoid membrane. The enzyme catalyses a plastoquinone + NADH + (n+1) H(+)(in) = a plastoquinol + NAD(+) + n H(+)(out). It catalyses the reaction a plastoquinone + NADPH + (n+1) H(+)(in) = a plastoquinol + NADP(+) + n H(+)(out). In terms of biological role, NDH shuttles electrons from NAD(P)H:plastoquinone, via FMN and iron-sulfur (Fe-S) centers, to quinones in the photosynthetic chain and possibly in a chloroplast respiratory chain. The immediate electron acceptor for the enzyme in this species is believed to be plastoquinone. Couples the redox reaction to proton translocation, and thus conserves the redox energy in a proton gradient. This is NAD(P)H-quinone oxidoreductase subunit 2 B, chloroplastic from Manihot esculenta (Cassava).